We begin with the raw amino-acid sequence, 287 residues long: Polyamine aminopropyltransferase (287 aa).

Residues 5-238 (ETWHETLHDH…GIMTFAWASQ (234 aa)) form the PABS domain. Gln-33 lines the S-methyl-5'-thioadenosine pocket. Spermidine is bound by residues His-64 and Asp-88. Residues Glu-108 and 140–141 (DG) contribute to the S-methyl-5'-thioadenosine site. Asp-158 serves as the catalytic Proton acceptor. Residue 158–161 (DCTD) participates in spermidine binding. Pro-165 is an S-methyl-5'-thioadenosine binding site.

The protein belongs to the spermidine/spermine synthase family. Homodimer or homotetramer.

The protein resides in the cytoplasm. The catalysed reaction is S-adenosyl 3-(methylsulfanyl)propylamine + putrescine = S-methyl-5'-thioadenosine + spermidine + H(+). Its pathway is amine and polyamine biosynthesis; spermidine biosynthesis; spermidine from putrescine: step 1/1. Its function is as follows. Catalyzes the irreversible transfer of a propylamine group from the amino donor S-adenosylmethioninamine (decarboxy-AdoMet) to putrescine (1,4-diaminobutane) to yield spermidine. This is Polyamine aminopropyltransferase from Sodalis glossinidius (strain morsitans).